Consider the following 221-residue polypeptide: Iron-sulfur cluster repair protein YtfE (221 aa).

Belongs to the RIC family. YtfE subfamily. In terms of assembly, homodimer.

It is found in the cytoplasm. In terms of biological role, di-iron-containing protein involved in the repair of iron-sulfur clusters damaged by oxidative and nitrosative stress conditions. In Pectobacterium atrosepticum (strain SCRI 1043 / ATCC BAA-672) (Erwinia carotovora subsp. atroseptica), this protein is Iron-sulfur cluster repair protein YtfE.